The following is a 654-amino-acid chain: DNA ligase (654 aa).

NAD(+) contacts are provided by residues aspartate 32–aspartate 36 and serine 81–leucine 82. Residue lysine 112 is the N6-AMP-lysine intermediate of the active site. Arginine 133, glutamate 167, and lysine 306 together coordinate NAD(+). Cysteine 400, cysteine 403, cysteine 416, and cysteine 421 together coordinate Zn(2+). In terms of domain architecture, BRCT spans glutamate 577–glutamate 654.

Belongs to the NAD-dependent DNA ligase family. LigA subfamily. Requires Mg(2+) as cofactor. Mn(2+) is required as a cofactor.

It carries out the reaction NAD(+) + (deoxyribonucleotide)n-3'-hydroxyl + 5'-phospho-(deoxyribonucleotide)m = (deoxyribonucleotide)n+m + AMP + beta-nicotinamide D-nucleotide.. In terms of biological role, DNA ligase that catalyzes the formation of phosphodiester linkages between 5'-phosphoryl and 3'-hydroxyl groups in double-stranded DNA using NAD as a coenzyme and as the energy source for the reaction. It is essential for DNA replication and repair of damaged DNA. The polypeptide is DNA ligase (Helicobacter acinonychis (strain Sheeba)).